A 339-amino-acid chain; its full sequence is Ubiquitin carboxyl-terminal hydrolase 50 (339 aa).

Positions 44 to 339 (TGLWNLGNTC…AFCKNSVTQA (296 aa)) constitute a USP domain. Catalysis depends on C53, which acts as the Nucleophile. H327 (proton acceptor) is an active-site residue.

This sequence belongs to the peptidase C19 family. As to expression, weakly expressed in a few tissues.

It localises to the cytoplasm. The protein resides in the cytoskeleton. Its subcellular location is the microtubule organizing center. It is found in the centrosome. The protein localises to the nucleus. The catalysed reaction is Thiol-dependent hydrolysis of ester, thioester, amide, peptide and isopeptide bonds formed by the C-terminal Gly of ubiquitin (a 76-residue protein attached to proteins as an intracellular targeting signal).. Its function is as follows. Deubiquitinating enzyme that removes conjugated ubiquitin from specific proteins to regulate different cellular processes. Regulates the inflammasome signaling pathway by deubiquitinating 'Lys-63'-linked polyubiquitination of the PYCARD/ASC adapter protein. Regulates the ubiquitination and stability of the ACE2 protein. Acts as a negative regulator of the G2/M checkpoint pathway, by preventing serine/threonine kinase WEE1 degradation, thereby repressing entry into mitosis following activation of the G2/M DNA damage checkpoint. The polypeptide is Ubiquitin carboxyl-terminal hydrolase 50 (Homo sapiens (Human)).